Reading from the N-terminus, the 509-residue chain is METELSETILPTVTKMYVCGPTVYNDAHIGHARIYVIVDLINRTMNKILNKPTHLVMNVTDIDDKIIRESKNKGITWLELARLHENSFFDCMSKLNVTRPDSVIRVTESISDIVLYIQQIINNGFAYIVSDSSVYFDSIEYKKAGYEFSEIDDEEEQQYESLLSKEIVSQKKHHKDFALWKGRSESDVGFNVEFIFDNQTFKSFGVPGWHIECSAMIKKTLGNSIDIHFGGIDLKFPHHYNECLQANAYHHPMYNPLHQSDTMIFHTWTREFIHVGHLCIKGQKMSKSLKNFSTIKEMLDKINSNQFRWLFMSTKWKQQVDFTDGLISIAKELDFTVVNFVNRVSNYPFEVSDVEFNDKETLLHDDFYRIQQRIYSYLTEFKFEMVARSIQHLIGTTNVYLDLPRPNESIVGKIRDYLLDLLDKLGFIYRVGNSSSSHKIKDLMNILIETRSQLRQLTRNPDLSPGIKKQLFDILDRQRNIQLPDIGIILEDSKDSSLWYENSCVQSSE.

Residue C19 coordinates Zn(2+). The 'HIGH' region motif lies at 21–31 (PTVYNDAHIGH). Positions 213, 238, and 242 each coordinate Zn(2+). A 'KMSKS' region motif is present at residues 284 to 288 (KMSKS). K287 contributes to the ATP binding site.

Belongs to the class-I aminoacyl-tRNA synthetase family. Zn(2+) is required as a cofactor.

The catalysed reaction is tRNA(Cys) + L-cysteine + ATP = L-cysteinyl-tRNA(Cys) + AMP + diphosphate. The polypeptide is Cysteine--tRNA ligase (CARS) (Acanthamoeba polyphaga (Amoeba)).